Here is a 326-residue protein sequence, read N- to C-terminus: N-acetyl-gamma-glutamyl-phosphate reductase (326 aa).

Residue C155 is part of the active site.

The protein belongs to the NAGSA dehydrogenase family. Type 1 subfamily.

It is found in the cytoplasm. It carries out the reaction N-acetyl-L-glutamate 5-semialdehyde + phosphate + NADP(+) = N-acetyl-L-glutamyl 5-phosphate + NADPH + H(+). Its pathway is amino-acid biosynthesis; L-arginine biosynthesis; N(2)-acetyl-L-ornithine from L-glutamate: step 3/4. Its function is as follows. Catalyzes the NADPH-dependent reduction of N-acetyl-5-glutamyl phosphate to yield N-acetyl-L-glutamate 5-semialdehyde. In Shewanella baltica (strain OS185), this protein is N-acetyl-gamma-glutamyl-phosphate reductase.